Consider the following 418-residue polypeptide: Glutamyl-tRNA reductase (418 aa).

Substrate is bound by residues 49–52 (TCNR), S109, 114–116 (EPQ), and Q120. The Nucleophile role is filled by C50. 189–194 (GAGETI) contacts NADP(+).

It belongs to the glutamyl-tRNA reductase family. Homodimer.

The catalysed reaction is (S)-4-amino-5-oxopentanoate + tRNA(Glu) + NADP(+) = L-glutamyl-tRNA(Glu) + NADPH + H(+). It participates in porphyrin-containing compound metabolism; protoporphyrin-IX biosynthesis; 5-aminolevulinate from L-glutamyl-tRNA(Glu): step 1/2. In terms of biological role, catalyzes the NADPH-dependent reduction of glutamyl-tRNA(Glu) to glutamate 1-semialdehyde (GSA). This chain is Glutamyl-tRNA reductase, found in Escherichia coli O127:H6 (strain E2348/69 / EPEC).